The primary structure comprises 207 residues: Urease accessory protein UreG (207 aa).

16–23 is a GTP binding site; that stretch reads GPVGSGKT.

The protein belongs to the SIMIBI class G3E GTPase family. UreG subfamily. Homodimer. UreD, UreF and UreG form a complex that acts as a GTP-hydrolysis-dependent molecular chaperone, activating the urease apoprotein by helping to assemble the nickel containing metallocenter of UreC. The UreE protein probably delivers the nickel.

It localises to the cytoplasm. Its function is as follows. Facilitates the functional incorporation of the urease nickel metallocenter. This process requires GTP hydrolysis, probably effectuated by UreG. This chain is Urease accessory protein UreG, found in Blochmanniella pennsylvanica (strain BPEN).